Here is a 127-residue protein sequence, read N- to C-terminus: Large ribosomal subunit protein bL19 (127 aa).

This sequence belongs to the bacterial ribosomal protein bL19 family.

Its function is as follows. This protein is located at the 30S-50S ribosomal subunit interface and may play a role in the structure and function of the aminoacyl-tRNA binding site. In Roseobacter denitrificans (strain ATCC 33942 / OCh 114) (Erythrobacter sp. (strain OCh 114)), this protein is Large ribosomal subunit protein bL19.